The sequence spans 428 residues: Enolase (428 aa).

Residue Gln163 coordinates (2R)-2-phosphoglycerate. Glu205 (proton donor) is an active-site residue. Mg(2+) contacts are provided by Asp242, Glu286, and Asp313. The (2R)-2-phosphoglycerate site is built by Lys338, Arg367, Ser368, and Lys389. The active-site Proton acceptor is the Lys338.

The protein belongs to the enolase family. Requires Mg(2+) as cofactor.

It localises to the cytoplasm. The protein localises to the secreted. It is found in the cell surface. It carries out the reaction (2R)-2-phosphoglycerate = phosphoenolpyruvate + H2O. It functions in the pathway carbohydrate degradation; glycolysis; pyruvate from D-glyceraldehyde 3-phosphate: step 4/5. Catalyzes the reversible conversion of 2-phosphoglycerate (2-PG) into phosphoenolpyruvate (PEP). It is essential for the degradation of carbohydrates via glycolysis. This chain is Enolase, found in Geobacter sulfurreducens (strain ATCC 51573 / DSM 12127 / PCA).